Consider the following 1035-residue polypeptide: MASFNSQLKMETGLHERDRAGVQDFVLLENYQSEEAFIGNLKKRFQEDLIYTYIGQVLISVNPYKQLPIYTDDHVKAYRNKHFYEMPPHIFAVTDNAFRSLIEENRGQCVLISGESGSGKTEASKKVLQFIAACSGNQTTVEGVKDKLLKSNPVLEAFGNAKTNRNDNSSRFGKYMDIQFDFKGAPIGGNILNYLLEKSRVVAQMGGERNFHIFYQLLAGADEALLQELRLERALDTYSYLTDGLNGTVTRINDADSFKQVQQALTVIDFTKEEQREIFGIVASILHLGNVGFTEVEGNAKVNSRDLVVTAARLLGVNASELEAALTHRTIDARGDVVTSPLNQELAIYARDALAKAVYDRLFSWLVQRLNISLQAKETRASRNNVMGILDIYGFEIFQKNSFEQFCINFCNEKLQQLFIELTLKSEQDEYRREGIEWIPVEYFDNKVICNLIEEKHKGIISILDEECLRPGEPTDKTFLEKLTQKLAQHHHYVCHEKAPAHIKKIMLRDEFRLVHYAGEVTYSVNGFLDKNNDLLFRDLKETLSKAGNGIVRNCFPEKELRSLKRPETAITQFRASLNNLMDILMCKEPSYIRCIKPNDLQTANVFNDELVLHQVKYLGLMENLRVRRAGFAYRRTYELFLERYKSLSKSTWPNYKGPGGPKAGVQQLVKDLGWDEEKYRVGETKLFIRWPRTLFDTEDAYQEKKHEIAAIIQAHWKGLMQRRKYLKLRAQVIIMQSYCRRKLAQQAAKKRREAADKIRAFIKGFITRNDAPNGFNEEFIANAKRMWLLRLAKELPTKVLDKSWPHAPGHCEEASGILHRLHRLHLARIYRLKLTPQQKRQFELKVLAEKVFKGKKNNYASSVSTWFQEDRIPKEHIQRVNDFVASTFGSEQLKYQSFCTKFDRHGYKSRDRFILLSNKAIYVLDGKTYKQKHRLPLDKIDFTLTNHNDDLMVIRIPLDLKKDKGDLILIIPRIIEFSTYIIDTVGTASIVSIVDRNSLEHNVVKGKGGVIDIQTGAEPGVVRDKGHLVIIGTQ.

Residues 21 to 703 enclose the Myosin motor domain; the sequence is GVQDFVLLEN…TLFDTEDAYQ (683 aa). 114-121 contributes to the ATP binding site; sequence GESGSGKT. The residue at position 304 (Ser304) is a Phosphoserine. Thr310 is modified (phosphothreonine). The tract at residues 578 to 600 is actin-binding; it reads LNNLMDILMCKEPSYIRCIKPND. 3 consecutive IQ domains span residues 696 to 728, 729 to 751, and 752 to 779; these read FDTE…KYLK, LRAQ…AAKK, and RREA…FNEE. The region spanning 857–1035 is the TH1 domain; it reads KNNYASSVST…KGHLVIIGTQ (179 aa).

This sequence belongs to the TRAFAC class myosin-kinesin ATPase superfamily. Myosin family. Binds F-actin. As to expression, in the embryo, expressed in gastric caeca, midgut cells of the proventriculus, and in the mid and hindgut. In the larval and adult gut brush border, expressed in the microvilli. Also expressed at high levels in follicle cells during oogenesis.

It localises to the cytoplasm. The protein resides in the cell cortex. The protein localises to the cell membrane. Its function is as follows. Unconventional myosin that functions as actin-based motor protein with ATPase activity. Binds to membranes enriched in phosphatidylinositol 4-5-bisphosphate, and can glide along actin filaments when anchored to a lipid bilayer. Functions as antagonist for Myo31DF, an unconventional myosin with an essential role in the establishment of body left-right asymmetry. This Drosophila melanogaster (Fruit fly) protein is Unconventional myosin IC (Myo61F).